A 147-amino-acid polypeptide reads, in one-letter code: Transthyretin (147 aa).

The N-terminal stretch at 1 to 20 is a signal peptide; that stretch reads MASHRLLLLCLAGLVFVSEA. A Sulfocysteine modification is found at cysteine 30. Lysine 35 serves as a coordination point for L-thyroxine. The residue at position 62 (glutamate 62) is a 4-carboxyglutamate; in a patient with Moyamoya disease. Residue serine 72 is modified to Phosphoserine. Glutamate 74 contacts L-thyroxine. The N-linked (GlcNAc...) asparagine glycan is linked to asparagine 118. Serine 137 serves as a coordination point for L-thyroxine.

It belongs to the transthyretin family. Homotetramer. Dimer of dimers. In the homotetramer, subunits assemble around a central channel that can accommodate two ligand molecules. Interacts with RBP4. Post-translationally, not glycosylated under normal conditions. Following unfolding, caused for example by variant AMYLD1 'Gly-38', the cryptic Asn-118 site is exposed and glycosylated by STT3B-containing OST complex, leading to its degradation by the ER-associated degradation (ERAD) pathway. Sulfonation of the reactive cysteine Cys-30 enhances the stability of the native conformation of TTR, avoiding misassembly of the protein leading to amyloid formation. In terms of tissue distribution, detected in serum and cerebrospinal fluid (at protein level). Highly expressed in choroid plexus epithelial cells. Detected in retina pigment epithelium and liver.

It is found in the secreted. The protein localises to the cytoplasm. Functionally, thyroid hormone-binding protein. Probably transports thyroxine from the bloodstream to the brain. This Homo sapiens (Human) protein is Transthyretin (TTR).